Consider the following 398-residue polypeptide: S-adenosylmethionine synthase (398 aa).

His-17 contacts ATP. Position 19 (Asp-19) interacts with Mg(2+). K(+) is bound at residue Glu-45. Positions 58 and 101 each coordinate L-methionine. Positions 101-111 (QSPDIAQGVDK) are flexible loop. ATP-binding positions include 176–178 (DGK), 243–244 (RF), Asp-252, 258–259 (RK), and Lys-279. Residue Asp-252 coordinates L-methionine. Position 283 (Lys-283) interacts with L-methionine.

It belongs to the AdoMet synthase family. In terms of assembly, homotetramer; dimer of dimers. Mg(2+) serves as cofactor. K(+) is required as a cofactor.

It is found in the cytoplasm. It catalyses the reaction L-methionine + ATP + H2O = S-adenosyl-L-methionine + phosphate + diphosphate. Its pathway is amino-acid biosynthesis; S-adenosyl-L-methionine biosynthesis; S-adenosyl-L-methionine from L-methionine: step 1/1. Catalyzes the formation of S-adenosylmethionine (AdoMet) from methionine and ATP. The overall synthetic reaction is composed of two sequential steps, AdoMet formation and the subsequent tripolyphosphate hydrolysis which occurs prior to release of AdoMet from the enzyme. This chain is S-adenosylmethionine synthase, found in Staphylococcus aureus (strain Mu3 / ATCC 700698).